The chain runs to 322 residues: Hapalindole dimethylallyltransferase (322 aa).

Residues R46, R60, K115, N166, Y168, R221, Y225, and K275 each contribute to the dimethylallyl diphosphate site.

This sequence belongs to the aromatic prenyltransferase family.

The enzyme catalyses hapalindole G + dimethylallyl diphosphate = ambiguine A + diphosphate. It catalyses the reaction hapalindole U + dimethylallyl diphosphate + H(+) = ambiguine H + diphosphate. Its activity is regulated as follows. Activity is slightly increased in the presence of Mg(2+). Functionally, prenyltransferase involved in the biosynthesis of ambiguines, a family of hapalindole-type alkaloids. Catalyzes the reverse prenylation of hapalindole G or U at the C2 position with dimethylallyl diphosphate (DMAPP) to generate ambiguine A or H, respectively. In addition, accepts hapalindole A, an epimer of hapalindole G, and catalyzes normal prenylation at its C2 position. The protein is Hapalindole dimethylallyltransferase of Fischerella ambigua (strain UTEX 1903).